The sequence spans 895 residues: uncharacterized protein (895 aa).

NAD(+) is bound at residue 2–19 (NISVIGTGYVGLIQAVGL). Residue C261 is part of the active site. Residues 468–614 (LIGYYLSEGW…LLILLQLLGI (147 aa)) enclose the DOD-type homing endonuclease domain.

The protein belongs to the UDP-glucose/GDP-mannose dehydrogenase family. In terms of processing, this protein undergoes a protein self splicing that involves a post-translational excision of the intervening region (intein) followed by peptide ligation.

This is an uncharacterized protein from Methanocaldococcus jannaschii (strain ATCC 43067 / DSM 2661 / JAL-1 / JCM 10045 / NBRC 100440) (Methanococcus jannaschii).